A 351-amino-acid chain; its full sequence is DNA polymerase IV (351 aa).

Positions 4 to 185 constitute a UmuC domain; that stretch reads IIHVDMDCFF…LPLAKIPGVG (182 aa). 2 residues coordinate Mg(2+): Asp-8 and Asp-103. Glu-104 is a catalytic residue.

Belongs to the DNA polymerase type-Y family. Monomer. Mg(2+) serves as cofactor.

It is found in the cytoplasm. It carries out the reaction DNA(n) + a 2'-deoxyribonucleoside 5'-triphosphate = DNA(n+1) + diphosphate. Its function is as follows. Poorly processive, error-prone DNA polymerase involved in untargeted mutagenesis. Copies undamaged DNA at stalled replication forks, which arise in vivo from mismatched or misaligned primer ends. These misaligned primers can be extended by PolIV. Exhibits no 3'-5' exonuclease (proofreading) activity. May be involved in translesional synthesis, in conjunction with the beta clamp from PolIII. This Escherichia coli (strain ATCC 8739 / DSM 1576 / NBRC 3972 / NCIMB 8545 / WDCM 00012 / Crooks) protein is DNA polymerase IV.